The sequence spans 90 residues: Acylphosphatase (90 aa).

The 86-residue stretch at 5-90 (CLKAWVTGRV…DPPPGTFELG (86 aa)) folds into the Acylphosphatase-like domain. Residues R20 and N38 contribute to the active site.

It belongs to the acylphosphatase family.

It catalyses the reaction an acyl phosphate + H2O = a carboxylate + phosphate + H(+). This is Acylphosphatase (acyP) from Chromohalobacter salexigens (strain ATCC BAA-138 / DSM 3043 / CIP 106854 / NCIMB 13768 / 1H11).